The chain runs to 122 residues: Ribonuclease P protein component 1 (122 aa).

The protein belongs to the eukaryotic/archaeal RNase P protein component 1 family. In terms of assembly, consists of a catalytic RNA component and at least 4-5 protein subunits.

It is found in the cytoplasm. It catalyses the reaction Endonucleolytic cleavage of RNA, removing 5'-extranucleotides from tRNA precursor.. Functionally, part of ribonuclease P, a protein complex that generates mature tRNA molecules by cleaving their 5'-ends. This chain is Ribonuclease P protein component 1, found in Thermococcus sibiricus (strain DSM 12597 / MM 739).